The following is a 423-amino-acid chain: Nucleoporin NUP42 (423 aa).

Residues 1-25 form a C3H1-type zinc finger; the sequence is MAICQFFLQGRCRFGDRCWNEHPGA. An FG 1 repeat occupies 14–15; sequence FG. A disordered region spans residues 24 to 85; that stretch reads GARGAGGGRQ…EKPYFSSFDS (62 aa). Residues 40-69 show a composition bias toward polar residues; that stretch reads SGNNRRGWNTTSQRYSNVIQPSSFSKSTPW. The interval 94-170 is interaction with HIV-1 Vpr; it reads GFGLSENPFA…EYHNFLTSNN (77 aa). Residues 95-96 form an FG 2 repeat; sequence FG. Ser106 is subject to Phosphoserine. 10 FG repeats span residues 218-219, 220-221, 265-266, 271-272, 288-289, 290-291, 311-312, 336-337, 345-346, and 364-365; these read FG. The segment at 365-423 is interaction with GLE1; sequence GNSSISTSLSASSSIIATDNVLFTPRDKLTVEELEQFQSKKFTLGKIPLKPPPLELLNV.

In terms of assembly, probable component of the nuclear pore complex (NPC). Interacts with nuclear export protein NXF1. Interacts with GLE1. Able to form a heterotrimer with NUP155 and GLE1 in vitro. Interacts with XPO1. As to quaternary structure, (Microbial infection) Interacts with the HIV-1 virus proteins Rev and Vpr. The interaction with HIV-1 Rev, a protein that mediates nuclear export of unspliced viral RNAs, suggests that its function may be bypassed by the HIV-1 virus. Post-translationally, O-glycosylated. As to expression, ubiquitously expressed.

The protein localises to the nucleus. It is found in the nuclear pore complex. It localises to the nucleus membrane. Required for the export of mRNAs containing poly(A) tails from the nucleus into the cytoplasm. In terms of biological role, (Microbial infection) In case of infection by HIV-1, it may participate in the docking of viral Vpr at the nuclear envelope. The chain is Nucleoporin NUP42 from Homo sapiens (Human).